A 434-amino-acid chain; its full sequence is Histidinol dehydrogenase (434 aa).

Residues Tyr130, Gln188, and Asn211 each contribute to the NAD(+) site. Ser237, Gln259, and His262 together coordinate substrate. 2 residues coordinate Zn(2+): Gln259 and His262. Catalysis depends on proton acceptor residues Glu326 and His327. Substrate is bound by residues His327, Asp360, Glu414, and His419. Asp360 lines the Zn(2+) pocket. His419 contacts Zn(2+).

The protein belongs to the histidinol dehydrogenase family. Homodimer. The cofactor is Zn(2+).

It catalyses the reaction L-histidinol + 2 NAD(+) + H2O = L-histidine + 2 NADH + 3 H(+). It participates in amino-acid biosynthesis; L-histidine biosynthesis; L-histidine from 5-phospho-alpha-D-ribose 1-diphosphate: step 9/9. Catalyzes the sequential NAD-dependent oxidations of L-histidinol to L-histidinaldehyde and then to L-histidine. The sequence is that of Histidinol dehydrogenase from Salmonella typhi.